Consider the following 263-residue polypeptide: Lens fiber major intrinsic protein (263 aa).

Residues 1–9 (MWELRSASF) are Cytoplasmic-facing. A helical transmembrane segment spans residues 10-29 (WRAIFAEFFATLFYVFFGLG). Over 30–41 (ASLRWAPGPLHV) the chain is Extracellular. A helical membrane pass occupies residues 42–59 (LQVALAFGLALAXLVQTV). Residues 60-61 (GH) are Cytoplasmic-facing. The segment at residues 62–77 (ISGAHVNPAVTFXFLV) is an intramembrane region (discontinuously helical). An NPA 1 motif is present at residues 68-70 (NPA). Over 78–82 (GSQMS) the chain is Cytoplasmic. A helical transmembrane segment spans residues 83–106 (LLRAFCYMAAQLLGAVAGAAVLYS). At 107–127 (VTPPAVRGNLALNTLHAGVSV) the chain is on the extracellular side. A helical transmembrane segment spans residues 128 to 148 (XQATTVEIFLTLQFVLCIFAT). Residues 149–156 (YDERRNGR) are Cytoplasmic-facing. Residues 157–175 (LGSVALAVGFSLTLGHLFG) form a helical membrane-spanning segment. The Extracellular portion of the chain corresponds to 176 to 178 (MYY). An intramembrane region (discontinuously helical) is located at residues 179-193 (TGAGMNPARSFAPAI). The short motif at 184–186 (NPA) is the NPA 2 element. Over 194 to 200 (LTRNFTN) the chain is Extracellular. A helical membrane pass occupies residues 201-222 (HWVYWVGPIIGGGLGSLLYDFL). Residues 223–263 (LFPRLKSVSERLSILKGTRPSDNNGQPEGTGEPVELKTQAL) lie on the Cytoplasmic side of the membrane. Residues 227–237 (LKSVSERLSIL) form an interaction with CALM region. A phosphoserine mark is found at Ser-235 and Ser-243. Positions 238–263 (KGTRPSDNNGQPEGTGEPVELKTQAL) are disordered. Asn-245 and Asn-246 each carry deamidated asparagine; by deterioration.

Belongs to the MIP/aquaporin (TC 1.A.8) family. In terms of assembly, homotetramer; each monomer provides an independent water pore. Two homotetramers on opposing membranes can dimerize, forming a cell-cell junction. Interacts with CALM; the calcium-calmodulin/CALM complex interacts with the cytoplasmic domains of two aquaporins, leading to channel closure. Interacts with BFSP1 (via C-terminus); prevents calcium-dependent inhibition of the water channel activity. Post-translationally, subject to partial proteolytic cleavage in the eye lens core. Partial proteolysis promotes interactions between tetramers from adjoining membranes. In terms of processing, fatty acylated at Met-1 and Lys-238. The acyl modifications, in decreasing order of ion abundance, are: oleoyl (C18:1) &gt; palmitoyl (C16:0) &gt; stearoyl (C18:0) &gt; eicosenoyl (C20:1) &gt; dihomo-gamma-linolenoyl (C20:3) &gt; palmitoleoyl (C16:1) &gt; eicosadienoyl (C20:2). As to expression, detected in eye lens (at protein level).

The protein resides in the cell membrane. It localises to the cell junction. The enzyme catalyses H2O(in) = H2O(out). Its activity is regulated as follows. The water channel activity is inhibited by calcium through calmodulin/CALM. Its function is as follows. Aquaporins form homotetrameric transmembrane channels, with each monomer independently mediating water transport across the plasma membrane along its osmotic gradient. Specifically expressed in lens fiber cells, this aquaporin is crucial for maintaining lens water homeostasis and transparency. Beyond water permeability, it also acts as a cell-to-cell adhesion molecule, forming thin junctions between lens fiber cells that are essential for maintaining the ordered structure and transparency of the lens. This Cavia porcellus (Guinea pig) protein is Lens fiber major intrinsic protein.